The following is a 313-amino-acid chain: UDP-N-acetylglucosamine 3-dehydrogenase (313 aa).

Positions 13, 14, and 38 each coordinate NAD(+).

It belongs to the Gfo/Idh/MocA family. As to quaternary structure, exists in multiple oligomeric states.

The enzyme catalyses UDP-N-acetyl-alpha-D-glucosamine + NAD(+) = UDP-2-acetamido-3-dehydro-2-deoxy-alpha-D-glucopyranose + NADH + H(+). It functions in the pathway bacterial outer membrane biogenesis; LPS lipid A biosynthesis. In terms of biological role, oxidoreductase involved in the synthesis of 2,3-diamino-2,3-dideoxy-D-glucopyranose (GlcN3N), which is a component of lipid A in some species. Catalyzes the NAD(+)-dependent oxidation of the glucosamine 3-position of UDP-N-acetyl-glucosamine (UDP-GlcNAc) to a ketone moiety, forming UDP-2-acetamido-3-dehydro-2-deoxy-alpha-D-glucopyranose (UDP-3-oxo-GlcNAc). Is specific for UDP-GlcNAc, no activity is observed with UDP-glucose (UDP-Glc), UDP-glucoronic acid (UDP-GlcA), UDP-galactose (UDP-Gal) and UDP-N-acetylgalactosamine (UDP-GalNAc). Cannot use FAD(+) and NADP(+). This Acidithiobacillus ferrooxidans (strain ATCC 23270 / DSM 14882 / CIP 104768 / NCIMB 8455) (Ferrobacillus ferrooxidans (strain ATCC 23270)) protein is UDP-N-acetylglucosamine 3-dehydrogenase.